The sequence spans 391 residues: Ferrochelatase (391 aa).

2 residues coordinate Fe cation: histidine 196 and glutamate 281.

The protein belongs to the ferrochelatase family.

The protein resides in the cytoplasm. The enzyme catalyses heme b + 2 H(+) = protoporphyrin IX + Fe(2+). It functions in the pathway porphyrin-containing compound metabolism; protoheme biosynthesis; protoheme from protoporphyrin-IX: step 1/1. In terms of biological role, catalyzes the ferrous insertion into protoporphyrin IX. The sequence is that of Ferrochelatase from Prochlorococcus marinus (strain AS9601).